A 608-amino-acid polypeptide reads, in one-letter code: Elongation factor 4 (608 aa).

A tr-type G domain is found at K11–S193. Residues D23–T28 and N140–D143 contribute to the GTP site.

This sequence belongs to the TRAFAC class translation factor GTPase superfamily. Classic translation factor GTPase family. LepA subfamily.

It is found in the cell membrane. The enzyme catalyses GTP + H2O = GDP + phosphate + H(+). Its function is as follows. Required for accurate and efficient protein synthesis under certain stress conditions. May act as a fidelity factor of the translation reaction, by catalyzing a one-codon backward translocation of tRNAs on improperly translocated ribosomes. Back-translocation proceeds from a post-translocation (POST) complex to a pre-translocation (PRE) complex, thus giving elongation factor G a second chance to translocate the tRNAs correctly. Binds to ribosomes in a GTP-dependent manner. The protein is Elongation factor 4 of Listeria innocua serovar 6a (strain ATCC BAA-680 / CLIP 11262).